A 620-amino-acid polypeptide reads, in one-letter code: 1-deoxy-D-xylulose-5-phosphate synthase (620 aa).

Thiamine diphosphate-binding positions include His80 and 121-123 (GHS). Asp152 provides a ligand contact to Mg(2+). Thiamine diphosphate contacts are provided by residues 153–154 (GA), Asn181, Tyr288, and Glu370. Residue Asn181 participates in Mg(2+) binding.

This sequence belongs to the transketolase family. DXPS subfamily. As to quaternary structure, homodimer. It depends on Mg(2+) as a cofactor. Thiamine diphosphate serves as cofactor.

It catalyses the reaction D-glyceraldehyde 3-phosphate + pyruvate + H(+) = 1-deoxy-D-xylulose 5-phosphate + CO2. The protein operates within metabolic intermediate biosynthesis; 1-deoxy-D-xylulose 5-phosphate biosynthesis; 1-deoxy-D-xylulose 5-phosphate from D-glyceraldehyde 3-phosphate and pyruvate: step 1/1. Catalyzes the acyloin condensation reaction between C atoms 2 and 3 of pyruvate and glyceraldehyde 3-phosphate to yield 1-deoxy-D-xylulose-5-phosphate (DXP). The chain is 1-deoxy-D-xylulose-5-phosphate synthase from Citrobacter koseri (strain ATCC BAA-895 / CDC 4225-83 / SGSC4696).